Here is a 1507-residue protein sequence, read N- to C-terminus: Transient receptor potential cation channel subfamily M member 2 (1507 aa).

Over residues 1-11 (MEPLDQRRTDS) the composition is skewed to basic and acidic residues. Residues 1–24 (MEPLDQRRTDSDQEEGFGVQSRRA) are disordered. Topologically, residues 1–751 (MEPLDQRRTD…WWGQLCVDNG (751 aa)) are cytoplasmic. 5 residues coordinate ADP-D-ribose: Thr173, Asn178, Arg301, Gly332, and Thr335. Thr739 carries the post-translational modification Phosphothreonine. An intramembrane segment occupies 752–768 (LWRIILCMLAFPLLFTG). The Cytoplasmic portion of the chain corresponds to 769 to 793 (FISFREKRLQALCRLARVRAFFNAP). A helical membrane pass occupies residues 794-814 (VVIFYLNILSYFAFLCLFAYV). The Extracellular portion of the chain corresponds to 815–825 (LMVDFQPSPSW). The chain crosses the membrane as a helical span at residues 826–846 (CEYLIYLWLFSLVCEETRQLF). Ca(2+)-binding residues include Glu841 and Gln844. Residues 847-865 (YDPDGCGLMKMASLYFSDF) lie on the Cytoplasmic side of the membrane. The chain crosses the membrane as a helical span at residues 866-886 (WNKLDVGAILLFIAGLTCRLI). Asn867 serves as a coordination point for Ca(2+). The Extracellular portion of the chain corresponds to 887–894 (PATLYPGR). A helical membrane pass occupies residues 895 to 915 (IILSLDFIMFCLRLMHIFTIS). The Cytoplasmic portion of the chain corresponds to 916-927 (KTLGPKIIIVKR). A helical transmembrane segment spans residues 928-948 (MMKDVFFFLFLLAVWVVSFGV). Residues 949-968 (AKQAILIHNESRVDWIFRGV) lie on the Extracellular side of the membrane. The pore-forming intramembrane region spans 969–983 (IYHSYLTIFGQIPTY). The Selectivity filter signature appears at 977 to 980 (FGQI). The Extracellular portion of the chain corresponds to 984–1020 (IDGVNFSMDQCSPNGTDPYKPKCPESDWTGQAPAFPE). The cysteines at positions 994 and 1006 are disulfide-linked. Residues 1021–1042 (WLTVTLLCLYLLFANILLLNLL) traverse the membrane as a helical segment. Topologically, residues 1043 to 1077 (IAMFNYTFQEVQEHTDQIWKFQRHDLIEEYHGRPP) are cytoplasmic. Position 1071 (Glu1071) interacts with Ca(2+). An intramembrane segment occupies 1078 to 1096 (APPPLILLSHLQLLIKRIV). The Cytoplasmic portion of the chain corresponds to 1097–1507 (LKIPAKRHKQ…KVASLFGAHF (411 aa)). In terms of domain architecture, Nudix hydrolase spans 1351–1502 (RWKRNQGGGI…KKILQKVASL (152 aa)). An ADP-D-ribose-binding site is contributed by Ser1379. Residues 1387 to 1408 (GSREPGKMLPRKLKQVLQQEYW) carry the Nudix box motif. Residues Asp1428, Arg1430, Tyr1489, and Asn1491 each coordinate ADP-D-ribose.

The protein belongs to the transient receptor (TC 1.A.4) family. LTrpC subfamily. TRPM2 sub-subfamily. As to quaternary structure, homotetramer. Phosphorylation of TRPM2 at Thr-739 by protein kinase C (PKC) counteracts the effect of cytosolic Ca(2+) and elevates the temperature threshold. Detected in pancreas beta-cells. Detected in fetal brain cortex neurons (at protein level).

It is found in the cell membrane. The protein resides in the perikaryon. The protein localises to the cell projection. Its subcellular location is the cytoplasmic vesicle. It localises to the lysosome. It catalyses the reaction Ca(2+)(in) = Ca(2+)(out). It carries out the reaction Na(+)(in) = Na(+)(out). Activated by intracellular ADP-ribose, beta-NAD (NAD(+)) and similar compounds, and by oxidative stress caused by reactive oxygen or nitrogen species. Ca(2+) and PI(4,5)P2 are required for channel opening by ADP-ribose. Activation by ADP-ribose and beta-NAD is strongly increased by moderate heat (35 to 40 degrees Celsius). Likewise, reactive oxygen species lower the threshold for activation by moderate heat (37 degrees Celsius). Activated by moderate heat (35 to 40 degrees Celsius). Inactivated by exposure to extracellular pH between 4.0 and 6.5; irreversibly inactivated when open channels are exposed to extracellular pH between 4.0 and 6.5, while pre-exposure of closed channels to extracellular pH 5.5 gives rise to currents that rapidly inactivate, but protects against irreversible inactivation. Inactivated by intracellular ATP. Activated by arachidonic acid. Inhibited by 2-aminoethyl diphenylborinate (2-APB). Nonselective, voltage-independent cation channel that mediates Na(+) and Ca(2+) influx, leading to increased cytoplasmic Ca(2+) levels. Functions as a ligand-gated ion channel gated by intracellular adenosine diphosphate ribose (ADP-ribose), Ca(2+), warm temperature, and oxidative stress. The precise physiological activators are under debate; the true, physiological activators may be ADP-ribose and ADP-ribose-2'-phosphate. Binding of ADP-ribose to the cytoplasmic Nudix domain causes a conformation change; the channel is primed but still requires Ca(2+) binding to trigger channel opening. Extracellular Ca(2+) passes through the channel and increases channel activity. Also contributes to Ca(2+) release from intracellular stores in response to ADP-ribose. Plays a role in numerous processes that involve signaling via intracellular Ca(2+) levels. Besides, mediates the release of lysosomal Zn(2+) stores in response to reactive oxygen species, leading to increased cytosolic Zn(2+) levels. Plays a role in insulin secretion, a process that requires increased cytoplasmic Ca(2+) levels. Required for normal IFNG and cytokine secretion and normal innate immune immunity in response to bacterial infection. Required for normal phagocytosis and cytokine release by macrophages exposed to zymosan (in vitro). Plays a role in dendritic cell differentiation and maturation, and in dendritic cell chemotaxis via its role in regulating cytoplasmic Ca(2+) levels. Plays a role in the regulation of the reorganization of the actin cytoskeleton and filopodia formation in response to reactive oxygen species via its function in increasing cytoplasmic Ca(2+) and Zn(2+) levels. Confers susceptibility to cell death following oxidative stress. This is Transient receptor potential cation channel subfamily M member 2 from Rattus norvegicus (Rat).